A 341-amino-acid polypeptide reads, in one-letter code: GTPase Obg (341 aa).

An Obg domain is found at 1 to 159; the sequence is MKFVDEALIK…RNLRLELRVL (159 aa). The disordered stretch occupies residues 128–150; it reads TRYKSSVNRSPRQTTPGSPGESR. Residues 129–144 show a composition bias toward polar residues; sequence RYKSSVNRSPRQTTPG. The 175-residue stretch at 160-334 folds into the OBG-type G domain; the sequence is ADVGLLGLPN…LCYALMQLID (175 aa). Residues 166–173, 191–195, 213–216, 283–286, and 315–317 contribute to the GTP site; these read GLPNAGKS, FTTLH, DIPG, NKID, and SAI. The Mg(2+) site is built by Ser173 and Thr193.

This sequence belongs to the TRAFAC class OBG-HflX-like GTPase superfamily. OBG GTPase family. As to quaternary structure, monomer. It depends on Mg(2+) as a cofactor.

It localises to the cytoplasm. An essential GTPase which binds GTP, GDP and possibly (p)ppGpp with moderate affinity, with high nucleotide exchange rates and a fairly low GTP hydrolysis rate. Plays a role in control of the cell cycle, stress response, ribosome biogenesis and in those bacteria that undergo differentiation, in morphogenesis control. This Legionella pneumophila (strain Lens) protein is GTPase Obg.